We begin with the raw amino-acid sequence, 357 residues long: Ribosomal RNA large subunit methyltransferase F (357 aa).

Polar residues predominate over residues 1-15; it reads MPKPPRSTQILSCNA. Positions 1–33 are disordered; that stretch reads MPKPPRSTQILSCNAPNGKPKTQHPSARAKVKR.

It belongs to the methyltransferase superfamily. METTL16/RlmF family.

The protein resides in the cytoplasm. It catalyses the reaction adenosine(1618) in 23S rRNA + S-adenosyl-L-methionine = N(6)-methyladenosine(1618) in 23S rRNA + S-adenosyl-L-homocysteine + H(+). Its function is as follows. Specifically methylates the adenine in position 1618 of 23S rRNA. The protein is Ribosomal RNA large subunit methyltransferase F of Shewanella putrefaciens (strain CN-32 / ATCC BAA-453).